The primary structure comprises 275 residues: Tryptase (275 aa).

The first 20 residues, 1–20 (MLNLLVLALPLLVSLVHTAP), serve as a signal peptide directing secretion. Positions 21-30 (APGQALERAG) are cleaved as a propeptide — activation peptide. The 242-residue stretch at 31–272 (IVGGKEAPGH…YLDWIHQCIP (242 aa)) folds into the Peptidase S1 domain. A disulfide bond links Cys-59 and Cys-75. Catalysis depends on charge relay system residues His-74 and Asp-121. Asn-132 is a glycosylation site (N-linked (GlcNAc...) asparagine). Intrachain disulfides connect Cys-155–Cys-230, Cys-188–Cys-211, and Cys-220–Cys-248. The Charge relay system role is filled by Ser-224. Asn-233 is a glycosylation site (N-linked (GlcNAc...) asparagine).

Belongs to the peptidase S1 family. Tryptase subfamily. In terms of assembly, homotetramer.

The protein localises to the secreted. It catalyses the reaction Preferential cleavage: Arg-|-Xaa, Lys-|-Xaa, but with more restricted specificity than trypsin.. In terms of biological role, tryptase is the major neutral protease present in mast cells and is secreted upon the coupled activation-degranulation response of this cell type. This is Tryptase (MCT7) from Sus scrofa (Pig).